The sequence spans 84 residues: Putative lipoprotein RzoQ (84 aa).

Positions 1–22 (MRNRNLLKFLPGLLICLIVLTS) are cleaved as a signal peptide. Residue Cys-23 is the site of N-palmitoyl cysteine attachment. The S-diacylglycerol cysteine moiety is linked to residue Cys-23.

It is found in the cell membrane. The protein is Putative lipoprotein RzoQ (rzoQ) of Escherichia coli (strain K12).